Here is a 291-residue protein sequence, read N- to C-terminus: Succinate--CoA ligase [ADP-forming] subunit alpha 1 (291 aa).

Residues 20–23 (TGFQ), Lys-46, and 99–101 (VTE) contribute to the CoA site. Residue Tyr-162 participates in substrate binding. His-249 serves as the catalytic Tele-phosphohistidine intermediate.

It belongs to the succinate/malate CoA ligase alpha subunit family. In terms of assembly, heterotetramer of two alpha and two beta subunits.

The enzyme catalyses succinate + ATP + CoA = succinyl-CoA + ADP + phosphate. It carries out the reaction GTP + succinate + CoA = succinyl-CoA + GDP + phosphate. The protein operates within carbohydrate metabolism; tricarboxylic acid cycle; succinate from succinyl-CoA (ligase route): step 1/1. In terms of biological role, succinyl-CoA synthetase functions in the citric acid cycle (TCA), coupling the hydrolysis of succinyl-CoA to the synthesis of either ATP or GTP and thus represents the only step of substrate-level phosphorylation in the TCA. The alpha subunit of the enzyme binds the substrates coenzyme A and phosphate, while succinate binding and nucleotide specificity is provided by the beta subunit. In Archaeoglobus fulgidus (strain ATCC 49558 / DSM 4304 / JCM 9628 / NBRC 100126 / VC-16), this protein is Succinate--CoA ligase [ADP-forming] subunit alpha 1.